Here is a 116-residue protein sequence, read N- to C-terminus: Ferredoxin (116 aa).

2 4Fe-4S ferredoxin-type domains span residues 2–31 (TYVV…EGER) and 35–64 (FMLV…PESP). Cys9 and Cys17 together coordinate [3Fe-4S] cluster. [4Fe-4S] cluster contacts are provided by Cys21, Cys44, Cys47, and Cys50. [3Fe-4S] cluster is bound at residue Cys54.

It depends on [4Fe-4S] cluster as a cofactor. [3Fe-4S] cluster serves as cofactor.

Its function is as follows. Ferredoxins are iron-sulfur proteins that transfer electrons in a wide variety of metabolic reactions. This chain is Ferredoxin (fdxA), found in Rickettsia conorii (strain ATCC VR-613 / Malish 7).